Here is an 83-residue protein sequence, read N- to C-terminus: Aminoacyl carrier protein (83 aa).

One can recognise a Carrier domain in the interval 1 to 80 (MNATIREILA…DTVKLILDGK (80 aa)). At S35 the chain carries O-(pantetheine 4'-phosphoryl)serine.

4'-phosphopantetheine is transferred from CoA to a specific serine of the apo-form of this carrier protein.

Its function is as follows. Aminoacyl carrier protein. Can be charged with L-alanine, L-glycine or L-serine, via the formation of a thioester bond between the amino acid and the 4'-phosphopantetheinyl prosthetic group, catalyzed by the Atu2573 ligase. The polypeptide is Aminoacyl carrier protein (Agrobacterium fabrum (strain C58 / ATCC 33970) (Agrobacterium tumefaciens (strain C58))).